Reading from the N-terminus, the 184-residue chain is MDSRLNPFQDKMEKTLNNLEEEYAGIRAGRANPHILDKLRVDYYGTPSPIQSVANVSVPEPRMIQIQPWEASMVKEIEKAINCSDIGINPTNDGKLIRLVFPELTEERRKDLAKDIKKKGEEAKVAVRNIRRDAIDSIKKTGKEEGISEDEIKGLEDDAQKLTDKFVAKVDAAVDAKCKEILTV.

The protein belongs to the RRF family.

It localises to the cytoplasm. Responsible for the release of ribosomes from messenger RNA at the termination of protein biosynthesis. May increase the efficiency of translation by recycling ribosomes from one round of translation to another. The polypeptide is Ribosome-recycling factor (Agathobacter rectalis (strain ATCC 33656 / DSM 3377 / JCM 17463 / KCTC 5835 / VPI 0990) (Eubacterium rectale)).